Consider the following 94-residue polypeptide: Co-chaperonin GroES (94 aa).

This sequence belongs to the GroES chaperonin family. Heptamer of 7 subunits arranged in a ring. Interacts with the chaperonin GroEL.

The protein localises to the cytoplasm. Functionally, together with the chaperonin GroEL, plays an essential role in assisting protein folding. The GroEL-GroES system forms a nano-cage that allows encapsulation of the non-native substrate proteins and provides a physical environment optimized to promote and accelerate protein folding. GroES binds to the apical surface of the GroEL ring, thereby capping the opening of the GroEL channel. The polypeptide is Co-chaperonin GroES (Caldanaerobacter subterraneus subsp. tengcongensis (strain DSM 15242 / JCM 11007 / NBRC 100824 / MB4) (Thermoanaerobacter tengcongensis)).